Here is a 362-residue protein sequence, read N- to C-terminus: S-adenosylmethionine-dependent nucleotide dehydratase RSAD2 (362 aa).

The disordered stretch occupies residues 49 to 71 (QQLQGKTEAGEPPRAQEDSHLPT). Residues 56–68 (EAGEPPRAQEDSH) show a composition bias toward basic and acidic residues. The region spanning 70-290 (PTTPTSVNYH…LDRHKDVSCL (221 aa)) is the Radical SAM core domain. 3 residues coordinate [4Fe-4S] cluster: Cys84, Cys88, and Cys91. Lys198 is modified (N6-acetyllysine). Lys207 participates in a covalent cross-link: Glycyl lysine isopeptide (Lys-Gly) (interchain with G-Cter in ubiquitin).

It belongs to the radical SAM superfamily. RSAD2 family. In terms of assembly, homodimer. Interacts with IRAK1 and TRAF6. Interacts with FPPS. Interacts with HADHB. Interacts (via C-terminus) with VAPA/VAP33 (via C-terminus). The cofactor is [4Fe-4S] cluster. Post-translationally, acetylated by HAT1. HAT1-mediated acetylation of Lys-198 in turn recruits UBE4A that stimulates RSAD2 polyubiquitination leading to proteasomal degradation. In terms of processing, 'Lys-6'-linked polyubiquitination at Lys-207 leads to RSAD2 protein degradation.

It is found in the endoplasmic reticulum membrane. The protein localises to the golgi apparatus. It localises to the endoplasmic reticulum. Its subcellular location is the lipid droplet. The protein resides in the mitochondrion. It is found in the mitochondrion inner membrane. The protein localises to the mitochondrion outer membrane. The enzyme catalyses CTP + AH2 + S-adenosyl-L-methionine = 3'-deoxy-3',4'-didehydro-CTP + 5'-deoxyadenosine + L-methionine + A + H2O + H(+). Its activity is regulated as follows. IRAK1 and TRAF6 synergistically activate RSAD2 increasing its activity with CTP as substrate about 10-fold. In terms of biological role, interferon-inducible antiviral protein which plays a major role in the cell antiviral state induced by type I and type II interferon. Catalyzes the conversion of cytidine triphosphate (CTP) to 3'-deoxy-3',4'-didehydro-CTP (ddhCTP) via a SAM-dependent radical mechanism. In turn, ddhCTP acts as a chain terminator for the RNA-dependent RNA polymerases from multiple viruses and directly inhibits viral replication. Therefore, inhibits a wide range of DNA and RNA viruses. Also promotes TLR7 and TLR9-dependent production of IFN-beta production in plasmacytoid dendritic cells (pDCs) by facilitating 'Lys-63'-linked ubiquitination of IRAK1 by TRAF6. Plays a role in CD4+ T-cells activation and differentiation. Facilitates T-cell receptor (TCR)-mediated GATA3 activation and optimal T-helper 2 (Th2) cytokine production by modulating NFKB1 and JUNB activities. Can inhibit secretion of soluble proteins. The polypeptide is S-adenosylmethionine-dependent nucleotide dehydratase RSAD2 (Sus scrofa (Pig)).